The following is a 95-amino-acid chain: MTKSDLIERLTSKHFQLSVKEVEDSVKETLTLMANSLAQGERIEVRGFGSFSLHYRAPRVGRNPKTGDRVELDGKYVPHFKPGKALRERVNAANA.

It belongs to the bacterial histone-like protein family. As to quaternary structure, heterodimer of an alpha and a beta chain.

This protein is one of the two subunits of integration host factor, a specific DNA-binding protein that functions in genetic recombination as well as in transcriptional and translational control. The protein is Integration host factor subunit beta of Psychromonas ingrahamii (strain DSM 17664 / CCUG 51855 / 37).